Reading from the N-terminus, the 413-residue chain is RNA-binding protein 41 (413 aa).

Residues 223–235 (SVGDSGTAESPSL) are compositionally biased toward polar residues. The segment at 223–247 (SVGDSGTAESPSLLQDKGKQAAQGK) is disordered. S232 bears the Phosphoserine mark. Positions 309–387 (KVLYLKNLSP…KILVIEFGKN (79 aa)) constitute an RRM domain.

May bind RNA. The chain is RNA-binding protein 41 (RBM41) from Homo sapiens (Human).